Consider the following 209-residue polypeptide: Uracil phosphoribosyltransferase (209 aa).

5-phospho-alpha-D-ribose 1-diphosphate-binding positions include Arg-79, Arg-104, and 131-139; that span reads DPMLATGAS. Uracil contacts are provided by residues Ile-194 and 199–201; that span reads GDA. Asp-200 is a 5-phospho-alpha-D-ribose 1-diphosphate binding site.

The protein belongs to the UPRTase family. Requires Mg(2+) as cofactor.

The enzyme catalyses UMP + diphosphate = 5-phospho-alpha-D-ribose 1-diphosphate + uracil. Its pathway is pyrimidine metabolism; UMP biosynthesis via salvage pathway; UMP from uracil: step 1/1. Allosterically activated by GTP. In terms of biological role, catalyzes the conversion of uracil and 5-phospho-alpha-D-ribose 1-diphosphate (PRPP) to UMP and diphosphate. In Staphylococcus carnosus (strain TM300), this protein is Uracil phosphoribosyltransferase.